Reading from the N-terminus, the 150-residue chain is Ribosomal RNA large subunit methyltransferase H (150 aa).

S-adenosyl-L-methionine is bound by residues alanine 100 and 118–123; that span reads LSEMTF.

It belongs to the RNA methyltransferase RlmH family. As to quaternary structure, homodimer.

Its subcellular location is the cytoplasm. The catalysed reaction is pseudouridine(1915) in 23S rRNA + S-adenosyl-L-methionine = N(3)-methylpseudouridine(1915) in 23S rRNA + S-adenosyl-L-homocysteine + H(+). Functionally, specifically methylates the pseudouridine at position 1915 (m3Psi1915) in 23S rRNA. This chain is Ribosomal RNA large subunit methyltransferase H, found in Helicobacter pylori (strain HPAG1).